Consider the following 323-residue polypeptide: Peroxidase 16 (323 aa).

The signal sequence occupies residues 1–23 (MKNQSSFSIVALLLIFFSSSVFA). Cystine bridges form between cysteine 34–cysteine 113, cysteine 67–cysteine 72, cysteine 119–cysteine 319, and cysteine 198–cysteine 230. Residue histidine 65 is the Proton acceptor of the active site. The Ca(2+) site is built by aspartate 66, valine 69, glycine 71, aspartate 73, and serine 75. Residue proline 161 coordinates substrate. Histidine 191 serves as a coordination point for heme b. Threonine 192 serves as a coordination point for Ca(2+). Ca(2+) is bound by residues aspartate 243, serine 246, and aspartate 251.

Belongs to the peroxidase family. Classical plant (class III) peroxidase subfamily. The cofactor is heme b. Ca(2+) serves as cofactor. In terms of tissue distribution, expressed in the whole plant, but preferentially in roots and leaves.

It is found in the secreted. The enzyme catalyses 2 a phenolic donor + H2O2 = 2 a phenolic radical donor + 2 H2O. In terms of biological role, removal of H(2)O(2), oxidation of toxic reductants, biosynthesis and degradation of lignin, suberization, auxin catabolism, response to environmental stresses such as wounding, pathogen attack and oxidative stress. These functions might be dependent on each isozyme/isoform in each plant tissue. In Arabidopsis thaliana (Mouse-ear cress), this protein is Peroxidase 16 (PER16).